Consider the following 192-residue polypeptide: UPF0149 protein YgfB (192 aa).

Belongs to the UPF0149 family.

The polypeptide is UPF0149 protein YgfB (Salmonella agona (strain SL483)).